The following is a 363-amino-acid chain: Ferredoxin--NADP reductase, cyanelle (363 aa).

The N-terminal 65 residues, 1–65 (MAFVASVPVF…TFEVDTTIRA (65 aa)), are a transit peptide targeting the cyanelle. Residues 84–206 (ANPYIGKCIY…TGPVGTTMLM (123 aa)) enclose the FAD-binding FR-type domain. FAD contacts are provided by residues 142 to 145 (RLYS), 163 to 165 (SVK), Y169, 180 to 182 (VCS), and T221. NADP(+) contacts are provided by S145 and K165. NADP(+) is bound by residues T221, 253–254 (VP), 283–284 (SR), K293, 322–323 (GL), and E361.

The protein belongs to the ferredoxin--NADP reductase type 1 family. FAD is required as a cofactor.

The protein resides in the plastid. The protein localises to the cyanelle stroma. It localises to the cyanelle thylakoid membrane. It carries out the reaction 2 reduced [2Fe-2S]-[ferredoxin] + NADP(+) + H(+) = 2 oxidized [2Fe-2S]-[ferredoxin] + NADPH. In terms of biological role, may play a key role in regulating the relative amounts of cyclic and non-cyclic electron flow to meet the demands of the plant for ATP and reducing power. The protein is Ferredoxin--NADP reductase, cyanelle (PETH) of Cyanophora paradoxa.